The sequence spans 255 residues: Aliphatic sulfonates import ATP-binding protein SsuB (255 aa).

The 222-residue stretch at 12 to 233 (LLLNAVSKHY…RLGSVRLAEL (222 aa)) folds into the ABC transporter domain. 44 to 51 (GRSGGGKS) serves as a coordination point for ATP.

This sequence belongs to the ABC transporter superfamily. Aliphatic sulfonates importer (TC 3.A.1.17.2) family. As to quaternary structure, the complex is composed of two ATP-binding proteins (SsuB), two transmembrane proteins (SsuC) and a solute-binding protein (SsuA).

The protein localises to the cell inner membrane. It catalyses the reaction ATP + H2O + aliphatic sulfonate-[sulfonate-binding protein]Side 1 = ADP + phosphate + aliphatic sulfonateSide 2 + [sulfonate-binding protein]Side 1.. Part of the ABC transporter complex SsuABC involved in aliphatic sulfonates import. Responsible for energy coupling to the transport system. In Shigella flexneri serotype 5b (strain 8401), this protein is Aliphatic sulfonates import ATP-binding protein SsuB.